We begin with the raw amino-acid sequence, 409 residues long: MAFGKSLFHAIGRVSLVRQIAAGLALGIVIGSVSPQLGLAAGLFGSLFVGALKAVAPVLVFILVAATIAQHQKGNKAHIRPIIVLYLIGTFSAALTAVIAGMVFPTHIVLAGAGDVSAAPPSGIVEVLKSLLMNLVANPINAIANANYIGILAWALVLGAALRNHGSDVTRQVVADLAEAVSTVVKWIIRFAPLGIFGLVSSTIAETGFGALAGYAKLLAVLLGCMAFIALVVNPAIVWWKIRRNPYPLVFTCLRESGVYAFFTRSSAANIPVNMALAKKLGLHEDTYSISIPLGATVNMGGAAITITVLAMAAAHTQGIQVDFATALLLSLVATVSACGASGVAGGSLLLIPLACSLFGISNDVAMQVVAVGFIIGVIQDSAETALNSSTDVLFTAAADLCRQRNRAE.

9 consecutive transmembrane segments (helical) span residues 24–44 (LALG…AGLF), 48–68 (FVGA…AATI), 82–102 (IIVL…IAGM), 142–162 (AIAN…GAAL), 194–214 (LGIF…ALAG), 218–238 (LLAV…PAIV), 292–312 (IPLG…VLAM), 319–339 (GIQV…VSAC), and 365–385 (VAMQ…SAET).

It belongs to the dicarboxylate/amino acid:cation symporter (DAACS) (TC 2.A.23) family.

It localises to the cell inner membrane. The catalysed reaction is L-serine(in) + Na(+)(in) = L-serine(out) + Na(+)(out). The enzyme catalyses L-threonine(in) + Na(+)(in) = L-threonine(out) + Na(+)(out). Involved in the import of serine and threonine into the cell, with the concomitant import of sodium (symport system). The chain is Serine/threonine transporter SstT from Neisseria meningitidis serogroup C (strain 053442).